The chain runs to 407 residues: Probable NADPH dehydrogenase (407 aa).

FMN is bound by residues Thr49 and Gln124. 201-204 provides a ligand contact to substrate; that stretch reads HGAH. The active-site Proton donor is the Tyr206. Residues Arg254 and Arg357 each contribute to the FMN site.

The protein belongs to the NADH:flavin oxidoreductase/NADH oxidase family. The cofactor is FMN.

It catalyses the reaction A + NADPH + H(+) = AH2 + NADP(+). Its function is as follows. Oxidoreductase that binds mammalian estrogens with high affinity. This Candida albicans (Yeast) protein is Probable NADPH dehydrogenase.